We begin with the raw amino-acid sequence, 356 residues long: Putative methylthioribose-1-phosphate isomerase (356 aa).

Residues 57-59 (RGA), R100, and Q206 each bind substrate. The active-site Proton donor is the D247. 257–258 (NK) provides a ligand contact to substrate.

The protein belongs to the eIF-2B alpha/beta/delta subunits family. MtnA subfamily.

The catalysed reaction is 5-(methylsulfanyl)-alpha-D-ribose 1-phosphate = 5-(methylsulfanyl)-D-ribulose 1-phosphate. Catalyzes the interconversion of methylthioribose-1-phosphate (MTR-1-P) into methylthioribulose-1-phosphate (MTRu-1-P). This Pyrococcus furiosus (strain ATCC 43587 / DSM 3638 / JCM 8422 / Vc1) protein is Putative methylthioribose-1-phosphate isomerase.